The chain runs to 383 residues: Opsin Rh4 (383 aa).

The Extracellular portion of the chain corresponds to 1 to 57; sequence MDIAGSLCNASEGPVLRPEARVSGNGDLQFLGWNVPPDQIQHIPEHWLTQLEPPASM. Asn9 carries N-linked (GlcNAc...) asparagine glycosylation. Residues 58-82 form a helical membrane-spanning segment; that stretch reads HYMLGVFYIFLFCASTVGNGMVIWI. Topologically, residues 83–94 are cytoplasmic; that stretch reads FSTSKALRTPSN. Residues 95-117 traverse the membrane as a helical segment; sequence MFVLNLAVFDFIMCLKAPIFIYN. Topologically, residues 118 to 133 are extracellular; sequence SFHRGFALGNTGCQIF. Cys130 and Cys207 form a disulfide bridge. Residues 134-153 traverse the membrane as a helical segment; it reads AAIGSYSGIGAGMTNAAIGY. Over 154 to 171 the chain is Cytoplasmic; that stretch reads DRLNVITKPMNRNMTFTK. Residues 172-196 traverse the membrane as a helical segment; that stretch reads AIIMNVIIWLYCTPWVVLPLTQFWD. Residues 197-220 are Extracellular-facing; sequence RFVPEGYLTSCTFDYLTDNFDTRL. Residues 221–248 form a helical membrane-spanning segment; sequence FVGTIFFFSFVCPTLMIIYYYSQIVGHV. The Cytoplasmic portion of the chain corresponds to 249–284; that stretch reads FSHEKALREQAKKMNVESLRSNVDKSKDTAEIRIAK. Residues 285–308 form a helical membrane-spanning segment; it reads AAITICFLFFVSWTPYGVMSLIGA. Residues 309-316 are Extracellular-facing; that stretch reads FGDKSLLT. A helical membrane pass occupies residues 317-341; that stretch reads PGATMIPACTCKLVACIDPFVYAIS. The residue at position 328 (Lys328) is an N6-(retinylidene)lysine. Topologically, residues 342–383 are cytoplasmic; sequence HPRYRMELQKRCPWLAIDEKAPESSSAASTTTTQEQQQTTAA. The interval 361 to 383 is disordered; the sequence is KAPESSSAASTTTTQEQQQTTAA. Positions 364-383 are enriched in low complexity; the sequence is ESSSAASTTTTQEQQQTTAA.

This sequence belongs to the G-protein coupled receptor 1 family. Opsin subfamily. Phosphorylated on some or all of the serine and threonine residues present in the C-terminal region.

The protein resides in the membrane. Its function is as follows. Visual pigments are the light-absorbing molecules that mediate vision. They consist of an apoprotein, opsin, covalently linked to cis-retinal. This chain is Opsin Rh4 (Rh4), found in Drosophila virilis (Fruit fly).